A 138-amino-acid chain; its full sequence is Small ribosomal subunit protein uS11c (138 aa).

Positions 1–21 (MAKSISKIGSRKNARIGSRKQ) are disordered. A compositionally biased stretch (basic residues) spans 9 to 21 (GSRKNARIGSRKQ).

The protein belongs to the universal ribosomal protein uS11 family. In terms of assembly, part of the 30S ribosomal subunit.

Its subcellular location is the plastid. It is found in the chloroplast. This Cicer arietinum (Chickpea) protein is Small ribosomal subunit protein uS11c.